The primary structure comprises 396 residues: Putative nickel insertion protein (396 aa).

Belongs to the LarC family.

In Methanosarcina mazei (strain ATCC BAA-159 / DSM 3647 / Goe1 / Go1 / JCM 11833 / OCM 88) (Methanosarcina frisia), this protein is Putative nickel insertion protein.